A 344-amino-acid polypeptide reads, in one-letter code: Meiotic recombination protein DMC1 homolog A (344 aa).

133–140 (GEFRSGKT) serves as a coordination point for ATP. DsDNA is bound at residue arginine 235. Residues arginine 235, phenylalanine 238, arginine 241, arginine 247, and arginine 315 each coordinate ssDNA. The dsDNA site is built by arginine 241 and arginine 247.

It belongs to the RecA family. DMC1 subfamily. As to expression, expressed in meiotic young panicles.

Its subcellular location is the nucleus. Recombinase that may participate in meiotic recombination, specifically in homologous strand assimilation, which is required for the resolution of meiotic double-strand breaks. Exhibits DNA-dependent ATPase activity when bound to single-stranded DNA (ssDNA). Mediates renaturation of homologous complementary strands as well as assimilation of single strands into homologous supercoiled duplexes leading to D-loop formation. Binds circular single-stranded DNA (ssDNA) and circular double-stranded DNA (dsDNA) in vitro. Catalyzes DNA homologous renaturation and DNA strand exchange. The rates of these activities are dependent on the state of ATP hydrolysis. Forms helical filaments along ssDNA and dsDNA, and promotes strand exchange between ssDNA and dsDNA with long DNA substrates of several thousand base pairs. The presence of the replication protein A is not required for this activity. Seems to be required for homologous pairing and subsequent chromosome segregation during male meiosis. May be not directly required for homologous pairing during male meiosis. Required for synaptonemal complex assembly and crossover formation. Functions redundantly with DMC1B. The chain is Meiotic recombination protein DMC1 homolog A from Oryza sativa subsp. japonica (Rice).